Reading from the N-terminus, the 980-residue chain is MGAMDLVFKLIFGSKEQNDAKILKPIAEKTLTFEEEIKKLSNEELTNKTKEFRERVEKYIGCKTEELDLSKEENKKKLQNILDEILPEAFAVVREASIRTTGMRHFDVQVMGGAVLHQGRIAEMKTGEGKTLVATLAVYLNALTGLGVHVVTVNDYLAKRDAEWMTPIYSMLGISVGILDNTRPHSPERRAVYNCDVVYGTNNEFGFDYLRDNMVTRKEDKVQRKFYFAIVDEVDSILIDEARTPLIISGPAEKNIKMYYEIDRIIPMLKQAEVDERMREVAGTGDYVLDEKDKNVYLTEEGVHKVEKLLNVENLYGAQSSTIVHHVNQALKAHKVFKKDVDYMVTDGEVLIVDEFTGRVLEGRRYSDGLHQAIEAKEKVAIQNESQTYATITFQNYFRMYPKLSGMTGTAETEAEEFYKIYKLDVAVIPTNKPIARQDLSDRIYRTRKAKFEALAKYIKELQDAGKPALVGTVSVEMNEELSKVFKRHKINHEVLNAKNHSREAAIIAQAGEPGAVTLATNMAGRGTDIVLGGNPVAKGVAEIEQILVLMRDKAFKERDPYKKEELTKKIKSIDLYKEAFVRSVISGKIEEAKELAQKNNADEMIEKIDRIIQINEKAKVDKERVLAAGGLHVIGSERHEARRIDNQLRGRSGRQGDPGLSVFFLSLEDDLMRLFGGERVSKMMLAMGMGEEEELGHKWLNKSIENAQRKVEGRNFDIRKHLLEYDDVMNQQRMAVYGERDYILYSDDISPRVEEIISEVTEETIEDISGNKKNVDALEVTKWLNSYLIGIDEDAANKAVEGGVDNAVKNLTNLLLEAYRKKASEIDEKIFREVEKNIFLSIIDNRWKDHLFAMDSLREGIGLRGYAEKNPLTEYKLEGYKMFMATMNVIHNELVNLIMRVRIIPNSFDTIERESAFDGGVEEKSSASAMNGGNAQAIQSKVKNAQPNVKMAQKIGRNDPCPCGSGKKYKHCHGKDNPQ.

ATP contacts are provided by residues glutamine 109, 127–131 (GEGKT), and aspartate 529. The tract at residues 954 to 980 (QKIGRNDPCPCGSGKKYKHCHGKDNPQ) is disordered. Positions 962, 964, 973, and 974 each coordinate Zn(2+).

The protein belongs to the SecA family. Monomer and homodimer. Part of the essential Sec protein translocation apparatus which comprises SecA, SecYEG and auxiliary proteins SecDF. Other proteins may also be involved. It depends on Zn(2+) as a cofactor.

The protein resides in the cell inner membrane. Its subcellular location is the cytoplasm. It carries out the reaction ATP + H2O + cellular proteinSide 1 = ADP + phosphate + cellular proteinSide 2.. In terms of biological role, part of the Sec protein translocase complex. Interacts with the SecYEG preprotein conducting channel. Has a central role in coupling the hydrolysis of ATP to the transfer of proteins into and across the cell membrane, serving as an ATP-driven molecular motor driving the stepwise translocation of polypeptide chains across the membrane. The protein is Protein translocase subunit SecA of Brachyspira hyodysenteriae (strain ATCC 49526 / WA1).